Consider the following 101-residue polypeptide: MFVKKGDKVRVIAGKDKGTEAVVLKALPKVNKVIVEGVGMIKKHQKPNTENPQGAIVEKEAPIHVSNVQVLDKNGVAGRVGYKVVDGKKVRYSKKSGEVLD.

This sequence belongs to the universal ribosomal protein uL24 family. Part of the 50S ribosomal subunit.

Its function is as follows. One of two assembly initiator proteins, it binds directly to the 5'-end of the 23S rRNA, where it nucleates assembly of the 50S subunit. Functionally, one of the proteins that surrounds the polypeptide exit tunnel on the outside of the subunit. This is Large ribosomal subunit protein uL24 from Streptococcus pyogenes serotype M2 (strain MGAS10270).